The chain runs to 94 residues: Adaptation to cold protein J (94 aa).

The J domain occupies 3–93; it reads NHFSVLGIKP…AMRELWDQFY (91 aa). The segment at 74 to 94 is essential for interaction with AtcC; that stretch reads NNVIVTDPNSAMRELWDQFYP.

Interacts via its C-terminal extension with AtcC. Does not interact with AtcA and AtcB.

Its function is as follows. Involved in cold adaptation. The J-domain is functional and can stimulate the ATPase activity of the DnaK chaperone. May work as a co-chaperone of the DnaK system to support cold resistance. The polypeptide is Adaptation to cold protein J (Shewanella oneidensis (strain ATCC 700550 / JCM 31522 / CIP 106686 / LMG 19005 / NCIMB 14063 / MR-1)).